The chain runs to 64 residues: Potassium channel toxin kappa-KTx 3.1 (64 aa).

Positions Met-1–Ala-26 are cleaved as a signal peptide. Residues Glu-27–Glu-36 constitute a propeptide that is removed on maturation. Intrachain disulfides connect Cys-43–Cys-61 and Cys-47–Cys-57.

The protein belongs to the short scorpion toxin superfamily. Potassium channel inhibitor kappa-KTx family. Kappa-KTx 3 subfamily. In terms of tissue distribution, expressed by the venom gland.

The protein localises to the secreted. In terms of biological role, potassium channel inhibitor (Kv). The chain is Potassium channel toxin kappa-KTx 3.1 from Heterometrus petersii (Asian forest scorpion).